The chain runs to 217 residues: Adenylate kinase (217 aa).

An ATP-binding site is contributed by 10 to 15; the sequence is GAGKGT. The tract at residues 30–59 is NMP; that stretch reads STGDMFRAAMKEETPLGLEAKSYIDKGELV. AMP-binding positions include Thr-31, Arg-36, 57–59, 85–88, and Gln-92; these read ELV and GFPR. The LID stretch occupies residues 126–163; the sequence is GRRICSVCGTTYHLVFNPPKTPGICDKDGGELYQRADD. Residue Arg-127 coordinates ATP. Positions 130 and 133 each coordinate Zn(2+). Residue 136 to 137 coordinates ATP; it reads TY. Positions 150 and 153 each coordinate Zn(2+). 2 residues coordinate AMP: Arg-160 and Arg-171. Gln-199 provides a ligand contact to ATP.

This sequence belongs to the adenylate kinase family. Monomer.

It localises to the cytoplasm. The enzyme catalyses AMP + ATP = 2 ADP. Its pathway is purine metabolism; AMP biosynthesis via salvage pathway; AMP from ADP: step 1/1. Its function is as follows. Catalyzes the reversible transfer of the terminal phosphate group between ATP and AMP. Plays an important role in cellular energy homeostasis and in adenine nucleotide metabolism. The polypeptide is Adenylate kinase (Bacillus subtilis (strain 168)).